Consider the following 964-residue polypeptide: Integrator complex subunit 7 (964 aa).

A compositionally biased stretch (low complexity) spans 937-958 (QQLRHQLQQQQQNVPQPAAQRN). The tract at residues 937–964 (QQLRHQLQQQQQNVPQPAAQRNISTRFQ) is disordered.

It belongs to the Integrator subunit 7 family. As to quaternary structure, component of the Integrator complex, composed of core subunits INTS1, INTS2, INTS3, INTS4, INTS5, INTS6, INTS7, INTS8, INTS9/RC74, INTS10, INTS11/CPSF3L, INTS12, INTS13, INTS14 and INTS15. The core complex associates with protein phosphatase 2A subunits PPP2CA and PPP2R1A, to form the Integrator-PP2A (INTAC) complex.

It is found in the nucleus. The protein resides in the chromosome. It localises to the cytoplasm. Functionally, component of the integrator complex, a multiprotein complex that terminates RNA polymerase II (Pol II) transcription in the promoter-proximal region of genes. The integrator complex provides a quality checkpoint during transcription elongation by driving premature transcription termination of transcripts that are unfavorably configured for transcriptional elongation: the complex terminates transcription by (1) catalyzing dephosphorylation of the C-terminal domain (CTD) of Pol II subunit POLR2A/RPB1 and SUPT5H/SPT5, (2) degrading the exiting nascent RNA transcript via endonuclease activity and (3) promoting the release of Pol II from bound DNA. The integrator complex is also involved in terminating the synthesis of non-coding Pol II transcripts, such as enhancer RNAs (eRNAs), small nuclear RNAs (snRNAs), telomerase RNAs and long non-coding RNAs (lncRNAs). Essential during embryogenesis for eye development. This is Integrator complex subunit 7 (ints7) from Danio rerio (Zebrafish).